A 158-amino-acid chain; its full sequence is Chromobox protein homolog 7 (158 aa).

One can recognise a Chromo domain in the interval 11–69 (FAVESIRKKRVRKGKVEYLVKWKGWPPKYSTWEPEEHILDPRLVMAYEEKEERDRASGY). The interval 60–127 (KEERDRASGY…WTPTLPSSEV (68 aa)) is disordered. Over residues 68 to 78 (GYRKRGPKPRR) the composition is skewed to basic residues.

In terms of assembly, component of a PRC1-like complex. Distinct PRC1-like core complexes are composed of a RING1 subunit (RING1B or RING1A), one of the six PCGF proteins (PCGF1-6), one PHC protein (PHC1-3) and one of the CBX proteins (CBX2, CBX4, CBX6, CBX7 or CBX8). The composition of the PRC1 complex may differ between the PRC1 complex in pluripotent embryonic stem cells containing RNF2, CBX7 and PCGF2, and the PRC1 complex in differentiating cells containing RNF2, CBX2, CBX4 and BMI1. Interacts with RING1. Interacts with RNF2, PHC1 and PCGF2. Interacts (via chromodomain) with histone H3K9Me3 and H3K27me3. Interacts with H3K9Me2 and H4K20Me1. Interacts (via chromodomain) with single-stranded and double-stranded RNA; RNA binding seems to be required for the localization to chromatin. Interacts with PCGF1, PCGF3, PCGF5 and PCGF6. As to expression, expressed in embryonic stem cells.

Its subcellular location is the nucleus. The protein localises to the chromosome. In terms of biological role, component of a Polycomb group (PcG) multiprotein PRC1-like complex, a complex class required to maintain the transcriptionally repressive state of many genes, including Hox genes, throughout development. PcG PRC1 complex acts via chromatin remodeling and modification of histones; it mediates monoubiquitination of histone H2A 'Lys-119', rendering chromatin heritably changed in its expressibility. Promotes histone H3 trimethylation at 'Lys-9' (H3K9me3). Binds to histone H3 trimethylated at 'Lys-9' (H3K9me3) or at 'Lys-27' (H3K27me3). Trimethylation at 'Lys-27' (H3K27me3) is important for chromatin recruitment. May possibly also bind trimethylated lysine residues in other proteins (in vitro). Binds non-coding, single-stranded RNA and double-stranded RNA. Plays a role in the timely repression of differentiation-specific genes in pluripotent embryonic stem cells to maintain the undifferentiated state. Regulator of cellular lifespan by maintaining the repression of CDKN2A, but not by inducing telomerase activity. This chain is Chromobox protein homolog 7 (Cbx7), found in Mus musculus (Mouse).